A 147-amino-acid chain; its full sequence is Transcriptional regulator MraZ (147 aa).

2 SpoVT-AbrB domains span residues 5–50 (AVAL…PLTA) and 79–122 (AQEE…SDAG).

Belongs to the MraZ family. As to quaternary structure, forms oligomers.

The protein resides in the cytoplasm. It is found in the nucleoid. The chain is Transcriptional regulator MraZ from Azoarcus sp. (strain BH72).